A 287-amino-acid chain; its full sequence is Inactive phospholipid phosphatase 7 (287 aa).

The tract at residues 1–75 (MPANQTRSRA…NNKDKKELPE (75 aa)) is disordered. Residues 1-120 (MPANQTRSRA…SSSWGSVRSM (120 aa)) are Cytoplasmic-facing. Positions 31 to 40 (SGGGGGGGES) are enriched in gly residues. Positions 49 to 65 (QRQQQNQQQQGDNPQPE) are enriched in low complexity. The helical transmembrane segment at 121–141 (VKLLALTGHGIPWVFGTIVCL) threads the bilayer. Topologically, residues 142–146 (MRSNT) are extracellular. The helical transmembrane segment at 147–167 (LAGQEVLVNLLLALLLDVMTV) threads the bilayer. Residues 168-215 (SGMQKLVKRKGPWEMPPGFFDYLAMDIYSFPAAHASRAVMVSKFLLAH) lie on the Cytoplasmic side of the membrane. A helical membrane pass occupies residues 216–236 (LVLAVPLRILLVLWAILVGIS). Residues 237 to 247 (RVLLGRHHLTD) are Extracellular-facing. Residues 248 to 268 (VGCGFALGFLHYSLVEMVWLS) traverse the membrane as a helical segment. Over 269–287 (SNTCQTLISIGTFNWSPLY) the chain is Cytoplasmic.

Belongs to the PA-phosphatase related phosphoesterase family.

It localises to the nucleus envelope. It is found in the endoplasmic reticulum membrane. The protein localises to the membrane. Its function is as follows. Plays a role as negative regulator of myoblast differentiation, in part through effects on MTOR signaling. Has no detectable enzymatic activity. The chain is Inactive phospholipid phosphatase 7 from Danio rerio (Zebrafish).